The primary structure comprises 62 residues: Cytotoxin 11 (62 aa).

4 disulfides stabilise this stretch: cysteine 3–cysteine 22, cysteine 15–cysteine 40, cysteine 44–cysteine 55, and cysteine 56–cysteine 61.

Belongs to the three-finger toxin family. Short-chain subfamily. Orphan group XV sub-subfamily. As to expression, expressed by the venom gland.

It is found in the secreted. The protein localises to the target cell membrane. In terms of biological role, has low cytotoxic activity. This Naja annulifera (Banded Egyptian cobra) protein is Cytotoxin 11.